Here is a 260-residue protein sequence, read N- to C-terminus: DNA repair protein RecO (260 aa).

Belongs to the RecO family.

In terms of biological role, involved in DNA repair and RecF pathway recombination. This Streptococcus gordonii (strain Challis / ATCC 35105 / BCRC 15272 / CH1 / DL1 / V288) protein is DNA repair protein RecO.